We begin with the raw amino-acid sequence, 601 residues long: MTSTPTELIRNFSIIAHIDHGKSTLADRLIQTTGALSAREMTEQVLDNMDIEKERGITIKAQTVRLNYKAKDGKTYVLNLMDTPGHVDFAYEVSRSLAACEGSLLVVDASQGVEAQTLANVYQAIDANHEIVPVLNKIDLPAAEPERVKQQIEDVIGLDASDAVEISAKTGLNIEAVLEALVTRLPPPKGDETAPLKAMLVDSWYDSYLGVIILVRVRDGRLRKGQRVRMMSTGAVHTIDQVGTFSPKLTPQADLGPGEIGYITAAIKTVADCNVGDTITDDRAPATEPLPGFKPSIPVVWCGLYPVDADDFEKLRDSLAKLRLNDASFHYEAETSAALGFGFRCGFLGLLHLEIIQERLSREFDLDLIATAPSVVYRLYKTSGEMMELHNPADMPDGSVIDHIEEPWIRATIMVPDDYLGAVLTLCNERRGQQVDLTYVGNRAMAVYRLPLNEVVFDFYDRLKSVSRGYASFDYQMDDYVEGDLVKISILVNQEPVDALAFIAHRSVADTRGRAICAKLKDLIPRQLFKIAIQAAIGGRVIARETLGALSKDVTAKCYGGDISRKRKLLEKQKEGKKRMRQFGKVEIPQTAFLAALKMDA.

Residues 7–189 (ELIRNFSIIA…ALVTRLPPPK (183 aa)) enclose the tr-type G domain. GTP is bound by residues 19-24 (DHGKST) and 136-139 (NKID).

It belongs to the TRAFAC class translation factor GTPase superfamily. Classic translation factor GTPase family. LepA subfamily.

Its subcellular location is the cell inner membrane. The enzyme catalyses GTP + H2O = GDP + phosphate + H(+). Required for accurate and efficient protein synthesis under certain stress conditions. May act as a fidelity factor of the translation reaction, by catalyzing a one-codon backward translocation of tRNAs on improperly translocated ribosomes. Back-translocation proceeds from a post-translocation (POST) complex to a pre-translocation (PRE) complex, thus giving elongation factor G a second chance to translocate the tRNAs correctly. Binds to ribosomes in a GTP-dependent manner. The chain is Elongation factor 4 from Acidiphilium cryptum (strain JF-5).